The primary structure comprises 419 residues: MAVQAALLSTHPFVPFGFGGSPDGLGGAFGALEKGCCFEDEETGTPAGALLAGAESGDAREATRDLLSFIDSASSNIKLALDKPGKSKRKVNHRKYLQKQIKRCSGLMGAAPPGPSSPGAADTPAKRPLAGAQTVPVPVPAHGKAAPRREASQAAAAASLQSRSLAALFDSLRHVPGGADPAGVAEAVPAAGLVRGDAAGSAGGPAVPGARKVPLRARNLPPSFFTEPSRAGGCVCGPSGPGVSLGDLEKGSEAAEFFELLGPDYGAGTEAGALLAAEPLDVFPAGAAVLRGPPELEPGLFDPQPAMVGSLLYPEPWSAPGGPATKKPPLPAPGGGLTLNEPLRSVYPAAADSPGGDDGPGLLASFTPFFSDCALPPAPPPQQVSYDYSAGYSRTAFAGLWRPDGAWEGAPGEEGAPRD.

The disordered stretch occupies residues 107 to 157 (LMGAAPPGPSSPGAADTPAKRPLAGAQTVPVPVPAHGKAAPRREASQAAAA).

This sequence belongs to the FAM181 family.

The protein is Protein FAM181B (FAM181B) of Bos taurus (Bovine).